Consider the following 187-residue polypeptide: Phosphatidylethanolamine-binding protein 1 (187 aa).

A phosphoserine mark is found at Ser-6 and Ser-13. A Phosphothreonine modification is found at Thr-42. Phosphoserine occurs at positions 52, 54, 98, and 153. The interaction with RAF1 stretch occupies residues 93–134; the sequence is KGNDISSGTVLSDYVGSGPPKGTGLHRYVWLVYEQDRPLKCD.

The protein belongs to the phosphatidylethanolamine-binding protein family. As to quaternary structure, has a tendency to form dimers by disulfide cross-linking. Interacts with RAF1 and this interaction is enhanced if RAF1 is phosphorylated on residues 'Ser-338', 'Ser-339', 'Tyr-340' and 'Tyr-341'. Interacts with ALOX15; in response to IL13/interleukin-13, prevents the interaction of PEBP1 with RAF1 to activate the ERK signaling cascade.

Its subcellular location is the cytoplasm. Its function is as follows. Binds ATP, opioids and phosphatidylethanolamine. Has lower affinity for phosphatidylinositol and phosphatidylcholine. Serine protease inhibitor which inhibits thrombin, neuropsin and chymotrypsin but not trypsin, tissue type plasminogen activator and elastase. Inhibits the kinase activity of RAF1 by inhibiting its activation and by dissociating the RAF1/MEK complex and acting as a competitive inhibitor of MEK phosphorylation. HCNP may be involved in the function of the presynaptic cholinergic neurons of the central nervous system. HCNP increases the production of choline acetyltransferase but not acetylcholinesterase. Seems to be mediated by a specific receptor. This chain is Phosphatidylethanolamine-binding protein 1 (PEBP1), found in Pongo abelii (Sumatran orangutan).